The primary structure comprises 301 residues: NAD kinase 2 (301 aa).

Asp-77 serves as the catalytic Proton acceptor. NAD(+) is bound by residues 77 to 78 (DG), Arg-82, 151 to 152 (NE), Lys-162, Asp-181, and 192 to 197 (TAYAFS).

The protein belongs to the NAD kinase family. A divalent metal cation serves as cofactor.

It is found in the cytoplasm. It carries out the reaction NAD(+) + ATP = ADP + NADP(+) + H(+). Functionally, involved in the regulation of the intracellular balance of NAD and NADP, and is a key enzyme in the biosynthesis of NADP. Catalyzes specifically the phosphorylation on 2'-hydroxyl of the adenosine moiety of NAD to yield NADP. This Streptomyces coelicolor (strain ATCC BAA-471 / A3(2) / M145) protein is NAD kinase 2.